The primary structure comprises 492 residues: MDAMKYHDLRDFLTLLEQQGELKRITLPVDPHLEITEIADRTLRAGGPALLFENPKGYAMPVLCNLFGTPKRVAMGMGQDDVSALREVGKLLAFLKEPEPPKGFRDLFDKLPQFKQVLNMPTKRLRGAPCQQKIASGDDVDLTRLPVMTCWPDDAAPLITWGLTVTRGPHKERQNLGIYRQQLIGKNKLIMRWLSHRGGALDFQEWLAAHPGERFPVSVALGADPATILGAVTPVPDTLSEYAFAGLLRGTKTEVVKCLSNDLEVPASAEIILEGYIEPGEMAPEGPYGDHTGYYNEVDNFPVFTVTHITQREDAIYHSTYTGRPPDEPAVLGVALNEVFVPILQKQFPEIVDFYLPPEGCSYRLAVVTMKKQYAGHAKRVMMGVWSFLRQFMYTKFVIVCDDDVNARDWNDVIWAITTRMDPARDTVLVENTPIDYLDFASPVSGLGSKMGLDATNKWPGETQREWGRPIVKDPEVTARIDAIWDELAIFK.

N175 is a Mn(2+) binding site. Residues 178 to 180, 192 to 194, and 197 to 198 contribute to the prenylated FMN site; these read IYR, RWL, and RG. E241 contributes to the Mn(2+) binding site. The active-site Proton donor is D290.

It belongs to the UbiD family. As to quaternary structure, homohexamer. Requires prenylated FMN as cofactor. It depends on Mn(2+) as a cofactor.

Its subcellular location is the cell membrane. The enzyme catalyses a 4-hydroxy-3-(all-trans-polyprenyl)benzoate + H(+) = a 2-(all-trans-polyprenyl)phenol + CO2. Its pathway is cofactor biosynthesis; ubiquinone biosynthesis. In terms of biological role, catalyzes the decarboxylation of 3-octaprenyl-4-hydroxy benzoate to 2-octaprenylphenol, an intermediate step in ubiquinone biosynthesis. This Salmonella choleraesuis (strain SC-B67) protein is 3-octaprenyl-4-hydroxybenzoate carboxy-lyase.